The sequence spans 343 residues: Branched-chain-amino-acid aminotransferase (343 aa).

Residue Lys-182 is modified to N6-(pyridoxal phosphate)lysine.

Belongs to the class-IV pyridoxal-phosphate-dependent aminotransferase family. It depends on pyridoxal 5'-phosphate as a cofactor.

It carries out the reaction L-leucine + 2-oxoglutarate = 4-methyl-2-oxopentanoate + L-glutamate. The enzyme catalyses L-isoleucine + 2-oxoglutarate = (S)-3-methyl-2-oxopentanoate + L-glutamate. The catalysed reaction is L-valine + 2-oxoglutarate = 3-methyl-2-oxobutanoate + L-glutamate. It participates in amino-acid biosynthesis; L-isoleucine biosynthesis; L-isoleucine from 2-oxobutanoate: step 4/4. The protein operates within amino-acid biosynthesis; L-leucine biosynthesis; L-leucine from 3-methyl-2-oxobutanoate: step 4/4. It functions in the pathway amino-acid biosynthesis; L-valine biosynthesis; L-valine from pyruvate: step 4/4. In terms of biological role, acts on leucine, isoleucine and valine. In Haemophilus influenzae (strain ATCC 51907 / DSM 11121 / KW20 / Rd), this protein is Branched-chain-amino-acid aminotransferase (ilvE).